The chain runs to 411 residues: MQRLAMDLRVLSRELALYLEHQVRVGFFGSGVGLSLILGFSVAYACYYLSSIAKKPQLVIGGESFSRFLQDHCPVVTETYYPTVWCWESRGQTLLRPFITSKPPVQYRNELIKTADGGQISLDWFDNNNSAYYVDASTRPTILLLPGLTGTSKESYILHMIHLSEELGYRCVVFNNRGVAGESLLTPRTYCCANTEDLEAVVHHVHSLYPGAPFLAAGVSMGGMLLLNYLGKIGSKTPLMAAATFSVGWNTFACSESLERPLNWLLFNYYLTTCLQSSVKKHRHMFVEQIDMDQVMKAKSIREFDKRFTAVMFGYRTLDDYYTDASPNRRLKSVGIPVLCLNATDDVFSPSHAIPIETAKQNPNVALVLTAYGGHIGFLEGIWPRQCTYMDRVFKQFVQAMVEHGHELSNM.

Residues 25–45 (VGFFGSGVGLSLILGFSVAYA) form a helical; Signal-anchor for type II membrane protein membrane-spanning segment. An AB hydrolase-1 domain is found at 140–233 (PTILLLPGLT…MLLLNYLGKI (94 aa)). Residues Ser220, Asp346, and His375 each act as charge relay system in the active site.

The protein belongs to the AB hydrolase superfamily. AB hydrolase 4 family. As to expression, widely expressed with higher expression in liver.

It localises to the membrane. The catalysed reaction is a 1,2-diacyl-sn-glycero-3-phosphocholine + H2O = a 1-acyl-sn-glycero-3-phosphocholine + a fatty acid + H(+). It catalyses the reaction a 1,2-diacyl-sn-glycero-3-phosphocholine + H2O = a 2-acyl-sn-glycero-3-phosphocholine + a fatty acid + H(+). The enzyme catalyses 1-tetradecanoyl-2-(9Z,12Z-octadecadienoyl)-sn-glycero-3-phosphocholine + H2O = 2-(9Z,12Z-octadecadienoyl)-sn-glycero-3-phosphocholine + tetradecanoate + H(+). It carries out the reaction 1-tetradecanoyl-2-(9Z,12Z-octadecadienoyl)-sn-glycero-3-phosphocholine + H2O = 1-tetradecanoyl-sn-glycero-3-phosphocholine + (9Z,12Z)-octadecadienoate + H(+). The catalysed reaction is 1-tetradecanoyl-2-(5Z,8Z,11Z,14Z-eicosatetraenoyl)-sn-glycero-3-phosphocholine + H2O = 2-(5Z,8Z,11Z,14Z)-eicosatetraenoyl-sn-glycero-3-phosphocholine + tetradecanoate + H(+). It catalyses the reaction 1-tetradecanoyl-2-(4Z,7Z,10Z,13Z,16Z,19Z-docosahexaenoyl)-sn-glycero-3-phosphocholine + H2O = 2-(4Z,7Z,10Z,13Z,16Z,19Z-docosahexaenoyl)-sn-glycero-3-phosphocholine + tetradecanoate + H(+). The enzyme catalyses 1,2-ditetradecanoyl-sn-glycero-3-phosphocholine + H2O = 2-tetradecanoyl-sn-glycero-3-phosphocholine + tetradecanoate + H(+). It carries out the reaction 1-octadecanoyl-2-acetyl-sn-glycero-3-phosphocholine + H2O = 1-octadecanoyl-sn-glycero-3-phosphocholine + acetate + H(+). The catalysed reaction is 1,2-ditetradecanoyl-sn-glycero-3-phosphocholine + H2O = 1-tetradecanoyl-sn-glycero-3-phosphocholine + tetradecanoate + H(+). It catalyses the reaction 1-octadecanoyl-2-pentanoyl-sn-glycero-3-phosphocholine + H2O = pentanoate + 1-octadecanoyl-sn-glycero-3-phosphocholine + H(+). The enzyme catalyses 1-octadecanoyl-2-hexanoyl-sn-glycero-3-phosphocholine + H2O = hexanoate + 1-octadecanoyl-sn-glycero-3-phosphocholine + H(+). It carries out the reaction 1-octadecanoyl-2-octanoyl-sn-glycero-3-phosphocholine + H2O = 1-octadecanoyl-sn-glycero-3-phosphocholine + octanoate + H(+). The catalysed reaction is 1-octadecanoyl-2-nonanoyl-sn-glycero-3-phosphocholine + H2O = nonanoate + 1-octadecanoyl-sn-glycero-3-phosphocholine + H(+). It catalyses the reaction 1-O-hexadecyl-2-nonadioyl-sn-glycero-3-phosphocholine + H2O = nonanedioate + 1-O-hexadecyl-sn-glycero-3-phosphocholine + H(+). The enzyme catalyses 1-hexadecanoyl-2-nonadioyl-sn-glycero-3-phosphocholine + H2O = nonanedioate + 1-hexadecanoyl-sn-glycero-3-phosphocholine + H(+). It carries out the reaction 1-hexadecanoyl-2-(9-oxononanoyl)-sn-glycero-3-phosphocholine + H2O = 9-oxononanoate + 1-hexadecanoyl-sn-glycero-3-phosphocholine + H(+). The catalysed reaction is 1-hexadecanoyl-2-(5-oxopentanoyl)-sn-glycero-3-phosphocholine + H2O = 5-oxopentanoate + 1-hexadecanoyl-sn-glycero-3-phosphocholine + H(+). It catalyses the reaction 1-hexadecanoyl-2-glutaroyl-sn-glycero-3-phosphocholine + H2O = glutarate + 1-hexadecanoyl-sn-glycero-3-phosphocholine + H(+). The enzyme catalyses 1-O-hexadecyl-2-acetyl-sn-glycero-3-phosphocholine + H2O = 1-O-hexadecyl-sn-glycero-3-phosphocholine + acetate + H(+). Functionally, phospholipase that may play a role in phospholipids remodeling. May selectively cleave myristate (C14)-containing phosphatidylcholines through its predominant phospholipase 1 activity, cleaving preferentially acyl groups in sn1 position. In parallel, may have a minor phospholipase 2 activity acting on acyl groups in position sn2. In addition to (C14)-containing phosphatidylcholines, may also act on other medium-chain-containing and oxidatively truncated phospholipids. The sequence is that of Phospholipase ABHD3 from Mus musculus (Mouse).